The chain runs to 956 residues: Bifunctional glutamine synthetase adenylyltransferase/adenylyl-removing enzyme (956 aa).

An adenylyl removase region spans residues 1–450 (MENMSEQALP…YFKETVGGQE (450 aa)). The segment at 456 to 956 (EQWTAQLWSL…IYEQVLNNGQ (501 aa)) is adenylyl transferase.

The protein belongs to the GlnE family. Mg(2+) serves as cofactor.

It carries out the reaction [glutamine synthetase]-O(4)-(5'-adenylyl)-L-tyrosine + phosphate = [glutamine synthetase]-L-tyrosine + ADP. The enzyme catalyses [glutamine synthetase]-L-tyrosine + ATP = [glutamine synthetase]-O(4)-(5'-adenylyl)-L-tyrosine + diphosphate. Involved in the regulation of glutamine synthetase GlnA, a key enzyme in the process to assimilate ammonia. When cellular nitrogen levels are high, the C-terminal adenylyl transferase (AT) inactivates GlnA by covalent transfer of an adenylyl group from ATP to specific tyrosine residue of GlnA, thus reducing its activity. Conversely, when nitrogen levels are low, the N-terminal adenylyl removase (AR) activates GlnA by removing the adenylyl group by phosphorolysis, increasing its activity. The regulatory region of GlnE binds the signal transduction protein PII (GlnB) which indicates the nitrogen status of the cell. The chain is Bifunctional glutamine synthetase adenylyltransferase/adenylyl-removing enzyme from Shewanella loihica (strain ATCC BAA-1088 / PV-4).